A 544-amino-acid polypeptide reads, in one-letter code: Putative pentatricopeptide repeat-containing protein At5g59200, chloroplastic (544 aa).

Positions 1–21 are disordered; the sequence is MISSLAAITGGPSTFRRDPDS. The transit peptide at 1-25 directs the protein to the chloroplast; that stretch reads MISSLAAITGGPSTFRRDPDSNTLR. PPR repeat units follow at residues 60-90, 91-125, 127-156, 157-187, 188-218, 219-253, 254-288, 289-319, 320-354, 355-385, and 391-421; these read DAFV…VSNP, NVYL…SVLP, NYVI…GFGS, SRSV…MPDR, DHVA…VKIK, DTVC…NVSA, NEFT…RMEL, SNFV…MRDK, DVIS…GFRP, NQVT…MKRV, and QIEH…IPIE. Positions 426–501 are type E motif; it reads MLGTLLSACK…EPGCSTIEVD (76 aa). The tract at residues 502 to 532 is type E(+) motif; it reads NQIHEFLVGDIAHPHKEAIYQRLQELNRILR.

It belongs to the PPR family. PCMP-E subfamily.

The protein localises to the plastid. Its subcellular location is the chloroplast. Its function is as follows. Involved in RNA editing event in chloroplasts. Required for the editing of a single site in rpl23 transcript. The chain is Putative pentatricopeptide repeat-containing protein At5g59200, chloroplastic (PCMP-E41) from Arabidopsis thaliana (Mouse-ear cress).